The sequence spans 783 residues: Lon protease (783 aa).

Positions 16–210 (LPLLASRGVV…KLLEIIKDEI (195 aa)) constitute a Lon N-terminal domain. 361 to 368 (GAPGVGKT) is a binding site for ATP. Positions 597–778 (KDRVGVATGM…DQVLDLILGG (182 aa)) constitute a Lon proteolytic domain. Residues serine 684 and lysine 727 contribute to the active site.

Belongs to the peptidase S16 family. Homohexamer. Organized in a ring with a central cavity.

Its subcellular location is the cytoplasm. The enzyme catalyses Hydrolysis of proteins in presence of ATP.. Functionally, ATP-dependent serine protease that mediates the selective degradation of mutant and abnormal proteins as well as certain short-lived regulatory proteins. Required for cellular homeostasis and for survival from DNA damage and developmental changes induced by stress. Degrades polypeptides processively to yield small peptide fragments that are 5 to 10 amino acids long. Binds to DNA in a double-stranded, site-specific manner. This chain is Lon protease, found in Halothermothrix orenii (strain H 168 / OCM 544 / DSM 9562).